A 469-amino-acid chain; its full sequence is Citrate synthase, mitochondrial (469 aa).

The N-terminal 33 residues, 1–33 (MAPVMRLGSAALRSSIHLTSRQTAFTAARCYSS), are a transit peptide targeting the mitochondrion. His-352 is an active-site residue.

Belongs to the citrate synthase family.

The protein resides in the mitochondrion matrix. The catalysed reaction is oxaloacetate + acetyl-CoA + H2O = citrate + CoA + H(+). It participates in carbohydrate metabolism; tricarboxylic acid cycle; isocitrate from oxaloacetate: step 1/2. This chain is Citrate synthase, mitochondrial (cit-1), found in Neurospora crassa (strain ATCC 24698 / 74-OR23-1A / CBS 708.71 / DSM 1257 / FGSC 987).